Consider the following 27-residue polypeptide: Antimicrobial peptide 1 (27 aa).

In terms of tissue distribution, expressed by the skin glands.

The protein resides in the secreted. Functionally, has very weak antimicrobial activity against Gram-positive bacterium S.aureus and Gram-negative bacterium E.coli and stronger activity against yeast C.albicans. Enhances the antibacterial activity of XT3. Has hemolytic activity against human red blood cells. The protein is Antimicrobial peptide 1 of Xenopus tropicalis (Western clawed frog).